A 119-amino-acid chain; its full sequence is Small ribosomal subunit protein bS16 (119 aa).

Belongs to the bacterial ribosomal protein bS16 family.

The chain is Small ribosomal subunit protein bS16 from Chlamydia felis (strain Fe/C-56) (Chlamydophila felis).